Consider the following 418-residue polypeptide: F-box protein At5g03970 (418 aa).

The F-box domain maps to 18 to 66; sequence STHEVLNSNDTMCEILILLPPETIYKLILVSKRWLEIIASPCFRHTYLA.

In Arabidopsis thaliana (Mouse-ear cress), this protein is F-box protein At5g03970.